Here is a 402-residue protein sequence, read N- to C-terminus: Oligopeptide transport ATP-binding protein OppD (402 aa).

The ABC transporter domain occupies 22–309; sequence LDITDLHVNF…PLHPYTWALI (288 aa). 58–65 contributes to the ATP binding site; sequence GESGSGKS.

It belongs to the ABC transporter superfamily. The complex is composed of two ATP-binding proteins (OppD and OppF), two transmembrane proteins (OppB and OppC) and a solute-binding protein (OppA).

It is found in the cell membrane. It carries out the reaction a [peptide](out) + ATP + H2O = a [peptide](in) + ADP + phosphate + H(+). Functionally, part of the ABC transporter complex OppABCDF involved in the uptake of oligopeptides. Probably responsible for energy coupling to the transport system. This is Oligopeptide transport ATP-binding protein OppD (oppD) from Mycoplasma genitalium (strain ATCC 33530 / DSM 19775 / NCTC 10195 / G37) (Mycoplasmoides genitalium).